A 1068-amino-acid chain; its full sequence is Tricorn protease homolog (1068 aa).

The segment at methionine 61–leucine 326 is six-bladed beta propeller. The tract at residues valine 338–arginine 686 is seven-bladed beta propeller. The tract at residues glutamate 692–tyrosine 762 is C-1. Histidine 756 acts as the Charge relay system in catalysis. The tract at residues serine 771–glutamate 864 is PDZ-like. A C-2 region spans residues arginine 865–leucine 1068. Position 927 (glycine 927) interacts with substrate. The active-site Nucleophile is serine 974. Glutamate 1032 acts as the Charge relay system in catalysis.

The protein belongs to the peptidase S41B family.

It localises to the cytoplasm. Functionally, degrades oligopeptides in a sequential manner. The chain is Tricorn protease homolog (tri) from Saccharolobus solfataricus (strain ATCC 35092 / DSM 1617 / JCM 11322 / P2) (Sulfolobus solfataricus).